A 226-amino-acid chain; its full sequence is Lipoprotein-releasing system ATP-binding protein LolD 1 (226 aa).

Residues 5-225 (LKLDGIRKSY…IVRVVDGKIA (221 aa)) form the ABC transporter domain. ATP is bound at residue 42–49 (GPSGSGKS).

This sequence belongs to the ABC transporter superfamily. Lipoprotein translocase (TC 3.A.1.125) family. The complex is composed of two ATP-binding proteins (LolD) and two transmembrane proteins (LolC and LolE).

It localises to the cell inner membrane. Its function is as follows. Part of the ABC transporter complex LolCDE involved in the translocation of mature outer membrane-directed lipoproteins, from the inner membrane to the periplasmic chaperone, LolA. Responsible for the formation of the LolA-lipoprotein complex in an ATP-dependent manner. In Rhodopseudomonas palustris (strain ATCC BAA-98 / CGA009), this protein is Lipoprotein-releasing system ATP-binding protein LolD 1.